A 519-amino-acid polypeptide reads, in one-letter code: MSLRPSTKTEIRRIRYKVSVDAEEGRRRREDFLVEIRKSKRNENLMKKRRVKVLPPDYKLISNDPFESLLEIANMITGVFSDDPSLQLEYTTRFRVVLSFDRSPPTDNVIKSGVVPRFVEFLKKDDNPKLQFEAAWALTNIASGASEHTKVVIDHGVVPLFVQLLASPDDDVREQAIWGLGNVAGDSIQCRDFVLNSGAFIPLLHQLNNHATLSILRNATWTLSNFFRGKPSPPFDLVKHVLPVLKRLVYSDDEQVLIDACWALSNLSDASNENIQSVIEAGVVPRLVELLQHASPVVLVPALRCIGNIVSGNSQQTHCVINCGVLPVLADLLTQNHMRGIRREACWTISNITAGLEEQIQSVIDANLIPSLVNLAQHAEFDIKKEAIWAISNASVGGSPNQIKYLVEQNCIKALCDILVCPDLRIILVSLGGLEMILIAGEVDKNLRDVNCYSQMIEDAEGLEKIENLQHHGNNEIYEKAVKILQTYGLVEEDGRLVEEEDEGGDGCSHPEFQFDFSR.

An IBB domain is found at 1 to 58 (MSLRPSTKTEIRRIRYKVSVDAEEGRRRREDFLVEIRKSKRNENLMKKRRVKVLPPDY). ARM repeat units lie at residues 103 to 143 (SPPT…NIAS), 146 to 185 (SEHTKVVIDHGVVPLFVQLLASPDDDVREQAIWGLGNVAG), 188 to 228 (IQCR…NFFR), 230 to 269 (KPSPPFDLVKHVLPVLKRLVYSDDEQVLIDACWALSNLSD), 272 to 311 (NENIQSVIEAGVVPRLVELLQHASPVVLVPALRCIGNIVS), 314 to 354 (SQQT…NITA), 357 to 396 (EEQIQSVIDANLIPSLVNLAQHAEFDIKKEAIWAISNASV), and 400 to 439 (PNQIKYLVEQNCIKALCDILVCPDLRIILVSLGGLEMILI).

It belongs to the importin alpha family. As to quaternary structure, forms a complex with importin subunit beta-1.

The protein localises to the nucleus envelope. In terms of biological role, binds to conventional NLS motifs and mediates nuclear protein import across the nuclear envelope. In Arabidopsis thaliana (Mouse-ear cress), this protein is Importin subunit alpha-5.